The primary structure comprises 374 residues: Alanine racemase (374 aa).

The active-site Proton acceptor; specific for D-alanine is Lys35. Lys35 carries the N6-(pyridoxal phosphate)lysine modification. Arg130 contacts substrate. Catalysis depends on Tyr261, which acts as the Proton acceptor; specific for L-alanine. Residue Met309 participates in substrate binding.

It belongs to the alanine racemase family. The cofactor is pyridoxal 5'-phosphate.

It catalyses the reaction L-alanine = D-alanine. The protein operates within amino-acid biosynthesis; D-alanine biosynthesis; D-alanine from L-alanine: step 1/1. Functionally, catalyzes the interconversion of L-alanine and D-alanine. May also act on other amino acids. The chain is Alanine racemase (alr) from Albidiferax ferrireducens (strain ATCC BAA-621 / DSM 15236 / T118) (Rhodoferax ferrireducens).